The sequence spans 306 residues: Ubiquitin carboxyl-terminal hydrolase RPN11 (306 aa).

Methionine 1 is subject to N-acetylmethionine. Positions 1–20 are disordered; that stretch reads MERLQRLMMNSKVGSADTGR. The MPN domain occupies 27–162; it reads VYISSIALLK…IDAFRLIDTG (136 aa). Zn(2+) contacts are provided by histidine 109, histidine 111, and aspartate 122. The short motif at 109–122 is the JAMM motif element; the sequence is HSHPGFGCWLSSVD.

Belongs to the peptidase M67A family. Component of the lid subcomplex of the 19S proteasome regulatory particle complex (also named PA700 complex). The 26S proteasome consists of a 20S proteasome core and two 19S regulatory subunits. Interacts directly with RPN8 and STS1. Post-translationally, N-acetylated by NAT3.

The enzyme catalyses Thiol-dependent hydrolysis of ester, thioester, amide, peptide and isopeptide bonds formed by the C-terminal Gly of ubiquitin (a 76-residue protein attached to proteins as an intracellular targeting signal).. In terms of biological role, component of the lid subcomplex of the 26S proteasome, a multiprotein complex involved in the ATP-dependent degradation of ubiquitinated proteins. RPN11 is the only catalytically active member of the lid and serves as the essential deubiquitinase of the proteasome. In Saccharomyces cerevisiae (strain ATCC 204508 / S288c) (Baker's yeast), this protein is Ubiquitin carboxyl-terminal hydrolase RPN11 (RPN11).